Reading from the N-terminus, the 158-residue chain is Small ribosomal subunit protein uS7 (158 aa).

It belongs to the universal ribosomal protein uS7 family. In terms of assembly, part of the 30S ribosomal subunit. Contacts proteins S9 and S11.

Its function is as follows. One of the primary rRNA binding proteins, it binds directly to 16S rRNA where it nucleates assembly of the head domain of the 30S subunit. Is located at the subunit interface close to the decoding center, probably blocks exit of the E-site tRNA. This is Small ribosomal subunit protein uS7 from Phocaeicola vulgatus (strain ATCC 8482 / DSM 1447 / JCM 5826 / CCUG 4940 / NBRC 14291 / NCTC 11154) (Bacteroides vulgatus).